The primary structure comprises 74 residues: MDMVSLKFIGIGLMAIGIYGAALGVSNIFSSLLSSIARNPSAAENLQRMALIGAGLAEAMGLFSFVIAMLLIFS.

The next 2 membrane-spanning stretches (helical) occupy residues 8-28 (FIGI…VSNI) and 52-72 (IGAG…MLLI).

It belongs to the ATPase C chain family. In terms of assembly, F-type ATPases have 2 components, F(1) - the catalytic core - and F(0) - the membrane proton channel. F(1) has five subunits: alpha(3), beta(3), gamma(1), delta(1), epsilon(1). F(0) has three main subunits: a(1), b(2) and c(10-14). The alpha and beta chains form an alternating ring which encloses part of the gamma chain. F(1) is attached to F(0) by a central stalk formed by the gamma and epsilon chains, while a peripheral stalk is formed by the delta and b chains.

Its subcellular location is the cell inner membrane. Functionally, f(1)F(0) ATP synthase produces ATP from ADP in the presence of a proton or sodium gradient. F-type ATPases consist of two structural domains, F(1) containing the extramembraneous catalytic core and F(0) containing the membrane proton channel, linked together by a central stalk and a peripheral stalk. During catalysis, ATP synthesis in the catalytic domain of F(1) is coupled via a rotary mechanism of the central stalk subunits to proton translocation. Key component of the F(0) channel; it plays a direct role in translocation across the membrane. A homomeric c-ring of between 10-14 subunits forms the central stalk rotor element with the F(1) delta and epsilon subunits. This Rickettsia akari (strain Hartford) protein is ATP synthase subunit c.